A 578-amino-acid polypeptide reads, in one-letter code: Interleukin-10 receptor subunit alpha (578 aa).

An N-terminal signal peptide occupies residues 1 to 21 (MLPCLVVLLAALLSLRLGSDA). Topologically, residues 22-235 (HGTELPSPPS…LTRQYFTVTN (214 aa)) are extracellular. Asn-50, Asn-74, Asn-110, Asn-154, Asn-177, and Asn-189 each carry an N-linked (GlcNAc...) asparagine glycan. Cys-56 and Cys-75 form a disulfide bridge. An intrachain disulfide couples Cys-202 to Cys-223. A helical transmembrane segment spans residues 236-256 (VIIFFAFVLLLSGALAYCLAL). Residues 257 to 578 (QLYVRRRKKL…PLISSLQSSE (322 aa)) are Cytoplasmic-facing. Residues 313–436 (LHGSTDSGFG…PPEPEVPGEE (124 aa)) form a disordered region. Over residues 316–332 (STDSGFGSTKPSLQTEE) the composition is skewed to polar residues. The BTRC recognition motif signature appears at 318-323 (DSGFGS). Over residues 357-371 (GDSCSSGSSNSTDSG) the composition is skewed to low complexity. The span at 377 to 396 (PSLSPSTGPTWEQQVGSNSR) shows a compositional bias: polar residues.

It belongs to the type II cytokine receptor family. Interacts with IL10. Interacts with IL10RB. Interacts (via its cytoplasmic domain) with JAK1 (via N-terminus). Interacts with BTRC; this interaction leads to IL10RA ubiquitination and subsequent degradation. Interacts with STAT3. In terms of assembly, (Microbial infection) Interacts with human cytomegalovirus protein IL10. As to quaternary structure, (Microbial infection) Interacts with Epstein-Barr virus protein IL10. Phosphorylated. Phosphorylation of the cytoplasmic tail induced STAT3 activation. In terms of processing, ubiquitinated by BTRC; ubiquitination leads to endocytosis and subsequent degradation of IL10RA. Primarily expressed in hematopoetic cells including B-cells, T-cells, NK cells, monocytes and macrophages. Not expressed in non-hematopoetic cells such as fibroblasts or endothelial cells.

It localises to the cell membrane. Its subcellular location is the cytoplasm. Cell surface receptor for the cytokine IL10 that participates in IL10-mediated anti-inflammatory functions, limiting excessive tissue disruption caused by inflammation. Upon binding to IL10, induces a conformational change in IL10RB, allowing IL10RB to bind IL10 as well. In turn, the heterotetrameric assembly complex, composed of two subunits of IL10RA and IL10RB, activates the kinases JAK1 and TYK2 that are constitutively associated with IL10RA and IL10RB respectively. These kinases then phosphorylate specific tyrosine residues in the intracellular domain in IL10RA leading to the recruitment and subsequent phosphorylation of STAT3. Once phosphorylated, STAT3 homodimerizes, translocates to the nucleus and activates the expression of anti-inflammatory genes. In addition, IL10RA-mediated activation of STAT3 inhibits starvation-induced autophagy. This is Interleukin-10 receptor subunit alpha (IL10RA) from Homo sapiens (Human).